A 54-amino-acid chain; its full sequence is Light-harvesting protein B-880 beta chain (54 aa).

The Cytoplasmic segment spans residues 1–20 (AEDRSSLSGVSDAEAKEFHA). The a bacteriochlorophyll site is built by histidine 19 and histidine 37. The helical transmembrane segment at 21 to 43 (LFVSSFMGFMVVAVLAHVLAWAW) threads the bilayer. The Periplasmic portion of the chain corresponds to 44 to 54 (RPWIPGPKGWA).

This sequence belongs to the antenna complex beta subunit family. In terms of assembly, the core complex is formed by different alpha and beta chains, binding bacteriochlorophyll molecules, and arranged most probably in tetrameric structures disposed around the reaction center. The non-pigmented gamma chains may constitute additional components.

Its subcellular location is the cell inner membrane. Antenna complexes are light-harvesting systems, which transfer the excitation energy to the reaction centers. The sequence is that of Light-harvesting protein B-880 beta chain from Rhodoblastus acidophilus (Rhodopseudomonas acidophila).